A 69-amino-acid chain; its full sequence is Putative membrane protein insertion efficiency factor (69 aa).

Belongs to the UPF0161 family.

It localises to the cell membrane. Could be involved in insertion of integral membrane proteins into the membrane. The sequence is that of Putative membrane protein insertion efficiency factor from Thermomicrobium roseum (strain ATCC 27502 / DSM 5159 / P-2).